The sequence spans 749 residues: EF-hand domain-containing family member C2 (749 aa).

3 DM10 domains span residues 75 to 182 (DKQV…RKIG), 226 to 368 (HGKI…KSKY), and 431 to 538 (KSNI…EQNT). An EF-hand domain is found at 558-593 (GKSRELKQVFKAADSKHTNMVDYNTFRDILMSLTVG).

Microtubule inner protein component of sperm flagellar doublet microtubules. As to expression, expressed in airway epithelial cells.

It is found in the cytoplasm. The protein resides in the cytoskeleton. The protein localises to the cilium axoneme. It localises to the flagellum axoneme. In terms of biological role, microtubule inner protein (MIP) part of the dynein-decorated doublet microtubules (DMTs) in cilia axoneme, which is required for motile cilia beating. This Homo sapiens (Human) protein is EF-hand domain-containing family member C2.